A 618-amino-acid polypeptide reads, in one-letter code: Transcriptional regulator CPUR_05421 (618 aa).

The zn(2)-C6 fungal-type DNA-binding region spans 14–41 (CSHLVGREIGCSRDLAGCRRCTSEGRAC). Residues 52–87 (TRRRNRANQDVTRSALYSSNTTPQTISDQATGRPCE) are disordered. The span at 59–81 (NQDVTRSALYSSNTTPQTISDQA) shows a compositional bias: polar residues.

It localises to the nucleus. Its function is as follows. Transcriptional regulator; part of the ergochrome gene cluster responsible for the typical purple-black color of the ergot sclerotia. The ergochrome gene cluster produces several ergot pigments including the yellow ergochrome secalonic acid and its derivatives, as well as the red anthraquinones endocrocin and clavorubin. The polypeptide is Transcriptional regulator CPUR_05421 (Claviceps purpurea (strain 20.1) (Ergot fungus)).